Here is a 359-residue protein sequence, read N- to C-terminus: Probable dual-specificity RNA methyltransferase RlmN (359 aa).

Glu100 functions as the Proton acceptor in the catalytic mechanism. The Radical SAM core domain maps to 106-340 (TDKRLTVCVS…VSVRASRGRD (235 aa)). Residues Cys113 and Cys345 are joined by a disulfide bond. [4Fe-4S] cluster-binding residues include Cys120, Cys124, and Cys127. Residues 167–168 (GE), Ser197, 226–228 (SLH), and Asn302 each bind S-adenosyl-L-methionine. The S-methylcysteine intermediate role is filled by Cys345.

The protein belongs to the radical SAM superfamily. RlmN family. It depends on [4Fe-4S] cluster as a cofactor.

It is found in the cytoplasm. The enzyme catalyses adenosine(2503) in 23S rRNA + 2 reduced [2Fe-2S]-[ferredoxin] + 2 S-adenosyl-L-methionine = 2-methyladenosine(2503) in 23S rRNA + 5'-deoxyadenosine + L-methionine + 2 oxidized [2Fe-2S]-[ferredoxin] + S-adenosyl-L-homocysteine. It catalyses the reaction adenosine(37) in tRNA + 2 reduced [2Fe-2S]-[ferredoxin] + 2 S-adenosyl-L-methionine = 2-methyladenosine(37) in tRNA + 5'-deoxyadenosine + L-methionine + 2 oxidized [2Fe-2S]-[ferredoxin] + S-adenosyl-L-homocysteine. Specifically methylates position 2 of adenine 2503 in 23S rRNA and position 2 of adenine 37 in tRNAs. The chain is Probable dual-specificity RNA methyltransferase RlmN from Prochlorococcus marinus (strain NATL2A).